Reading from the N-terminus, the 339-residue chain is Lipoate-protein ligase A (339 aa).

The BPL/LPL catalytic domain maps to 28-211 (NPDSHTLFLW…AFREYYRDTD (184 aa)). Residues arginine 70, 75–78 (GAVF), and lysine 129 each bind ATP. Lysine 129 contacts (R)-lipoate.

It belongs to the LplA family. As to quaternary structure, monomer.

It localises to the cytoplasm. The enzyme catalyses L-lysyl-[lipoyl-carrier protein] + (R)-lipoate + ATP = N(6)-[(R)-lipoyl]-L-lysyl-[lipoyl-carrier protein] + AMP + diphosphate + H(+). The protein operates within protein modification; protein lipoylation via exogenous pathway; protein N(6)-(lipoyl)lysine from lipoate: step 1/2. It participates in protein modification; protein lipoylation via exogenous pathway; protein N(6)-(lipoyl)lysine from lipoate: step 2/2. Catalyzes both the ATP-dependent activation of exogenously supplied lipoate to lipoyl-AMP and the transfer of the activated lipoyl onto the lipoyl domains of lipoate-dependent enzymes. The sequence is that of Lipoate-protein ligase A from Psychrobacter cryohalolentis (strain ATCC BAA-1226 / DSM 17306 / VKM B-2378 / K5).